The sequence spans 432 residues: Enolase (432 aa).

Residue Gln-163 coordinates (2R)-2-phosphoglycerate. Glu-205 (proton donor) is an active-site residue. Residues Asp-241, Glu-289, and Asp-316 each coordinate Mg(2+). (2R)-2-phosphoglycerate is bound by residues Lys-341, Arg-370, Ser-371, and Lys-392. The active-site Proton acceptor is Lys-341.

This sequence belongs to the enolase family. Mg(2+) serves as cofactor.

The protein resides in the cytoplasm. Its subcellular location is the secreted. It localises to the cell surface. The catalysed reaction is (2R)-2-phosphoglycerate = phosphoenolpyruvate + H2O. It functions in the pathway carbohydrate degradation; glycolysis; pyruvate from D-glyceraldehyde 3-phosphate: step 4/5. Catalyzes the reversible conversion of 2-phosphoglycerate (2-PG) into phosphoenolpyruvate (PEP). It is essential for the degradation of carbohydrates via glycolysis. This Treponema pallidum (strain Nichols) protein is Enolase.